The following is an 89-amino-acid chain: Small ribosomal subunit protein uS15 (89 aa).

The span at 1 to 10 shows a compositional bias: basic and acidic residues; the sequence is MPLNTEKKQE. Residues 1–22 are disordered; that stretch reads MPLNTEKKQELINSHQTHATDT. Over residues 11–22 the composition is skewed to polar residues; it reads LINSHQTHATDT.

This sequence belongs to the universal ribosomal protein uS15 family. Part of the 30S ribosomal subunit. Forms a bridge to the 50S subunit in the 70S ribosome, contacting the 23S rRNA.

One of the primary rRNA binding proteins, it binds directly to 16S rRNA where it helps nucleate assembly of the platform of the 30S subunit by binding and bridging several RNA helices of the 16S rRNA. Functionally, forms an intersubunit bridge (bridge B4) with the 23S rRNA of the 50S subunit in the ribosome. This chain is Small ribosomal subunit protein uS15, found in Synechococcus sp. (strain RCC307).